Here is a 124-residue protein sequence, read N- to C-terminus: Protein CYSTEINE-RICH TRANSMEMBRANE MODULE 10 (124 aa).

The interval 1–103 (MSYQDPQHPV…PKNKKDKKDS (103 aa)) is disordered. 2 stretches are compositionally biased toward pro residues: residues 27 to 40 (AGYPPPAGYPPPQY) and 65 to 88 (GYPPPQYPQGHPPQYPYQGPPPPH). Residues 101–118 (KDSGGFMEGCLAMLCCCV) traverse the membrane as a helical segment.

Belongs to the CYSTM1 family. In terms of assembly, heterodimers. Interacts with CYSTM7 and WIH1/CYSTM13. Mostly expressed in stems and,at low levels, in stems, roots, flowers, siliques and leaves.

Its subcellular location is the cell membrane. It localises to the cytoplasm. Involved in resistance to abiotic stress. The protein is Protein CYSTEINE-RICH TRANSMEMBRANE MODULE 10 of Arabidopsis thaliana (Mouse-ear cress).